Reading from the N-terminus, the 377-residue chain is Probable multidrug ABC transporter permease YbhS (377 aa).

Residues 1-28 (MSNPILSWRRVRALCVKETRQIVRDPSS) lie on the Cytoplasmic side of the membrane. A helical membrane pass occupies residues 29 to 49 (WLIAVVIPLLLLFIFGYGINL). Residues 50–181 (DSSKLRVGIL…WFNPAAISQH (132 aa)) lie on the Periplasmic side of the membrane. The ABC transmembrane type-2 domain occupies 145-375 (IWQIWQMQRA…GLTWLKTKRR (231 aa)). A helical transmembrane segment spans residues 182-202 (FIIPGAVTIIMTVIGAILTSL). Residues 203–234 (VVAREWERGTMEALLSTEITRTELLLCKLIPY) lie on the Cytoplasmic side of the membrane. Residues 235-255 (YFLGMLAMLLCMLVSVFILGV) traverse the membrane as a helical segment. Over 256 to 261 (PYRGSL) the chain is Periplasmic. Residues 262–282 (LILFFISSLFLLSTLGMGLLI) form a helical membrane-spanning segment. The Cytoplasmic portion of the chain corresponds to 283–291 (STITRNQFN). A helical membrane pass occupies residues 292 to 312 (AAQVALNAAFLPSIMLSGFIF). Residues 313-345 (QIDSMPAVIRAVTYIIPARYFVSTLQSLFLAGN) lie on the Periplasmic side of the membrane. The helical transmembrane segment at 346 to 366 (IPVVLVVNVLFLIASAVMFIG) threads the bilayer. Over 367-377 (LTWLKTKRRLD) the chain is Cytoplasmic.

Belongs to the ABC-2 integral membrane protein family. In terms of assembly, the complex is probably composed of two ATP-binding proteins (YbhF) and two transmembrane proteins (YbhR and YbhS).

Its subcellular location is the cell inner membrane. In terms of biological role, part of the ABC transporter complex YbhFSR that could be involved in efflux of cefoperazone. Probably involved in the translocation of the substrate across the membrane. The polypeptide is Probable multidrug ABC transporter permease YbhS (ybhS) (Escherichia coli O157:H7).